Reading from the N-terminus, the 126-residue chain is RuBisCO chaperone RbcX (126 aa).

Belongs to the RbcX family. As to quaternary structure, homodimer. Interacts with the exposed C-terminal peptide of RbcL via its central cleft, contacts a second RbcL monomer via its peripheral polar surface.

The protein resides in the carboxysome. It is found in the cytoplasm. An RbcL-specific chaperone. Required for assembly of the RbcL8 core. The central cleft of the RbcX homodimer (RbcX2) binds the C-terminus of a RbcL monomer, stabilizing the C-terminus and probably preventing its reassociation with chaperonin GroEL-ES. At the same time the peripheral region of RbcX2 binds a second RbcL monomer, bridging the RbcL homodimers in the correct orientation. The RbcX2(2)-bound RbcL dimers then assemble into the RbcL8 core (RbcL8-(RbcX2)8). RbcS binding triggers the release of RbcX2. This is RuBisCO chaperone RbcX from Thermosynechococcus vestitus (strain NIES-2133 / IAM M-273 / BP-1).